Consider the following 459-residue polypeptide: 1,3-beta-glucanosyltransferase gas2 (459 aa).

The first 19 residues, 1–19 (MVSFTKFTLQLLSASAAFA), serve as a signal peptide directing secretion. Residues asparagine 34 and asparagine 68 are each glycosylated (N-linked (GlcNAc...) asparagine). Cysteine 69 and cysteine 98 form a disulfide bridge. Position 87 (tyrosine 87) interacts with (1,3-beta-D-glucosyl)n. N-linked (GlcNAc...) asparagine glycans are attached at residues asparagine 90, asparagine 104, and asparagine 146. (1,3-beta-D-glucosyl)n contacts are provided by asparagine 155 and glutamate 156. Catalysis depends on glutamate 156, which acts as the Proton donor. An N-linked (GlcNAc...) asparagine glycan is attached at asparagine 160. Positions 197 and 202 each coordinate (1,3-beta-D-glucosyl)n. Cystine bridges form between cysteine 211–cysteine 350 and cysteine 235–cysteine 266. 3 N-linked (GlcNAc...) asparagine glycosylation sites follow: asparagine 212, asparagine 218, and asparagine 254. The Nucleophile role is filled by glutamate 263. Asparagine 284 carries an N-linked (GlcNAc...) asparagine glycan. Tyrosine 295 contributes to the (1,3-beta-D-glucosyl)n binding site. N-linked (GlcNAc...) asparagine glycosylation is found at asparagine 308, asparagine 334, asparagine 344, asparagine 354, and asparagine 370. 3 cysteine pairs are disulfide-bonded: cysteine 374-cysteine 427, cysteine 383-cysteine 449, and cysteine 402-cysteine 409. Residue asparagine 423 is glycosylated (N-linked (GlcNAc...) asparagine).

Belongs to the glycosyl hydrolase 72 family.

The protein resides in the endoplasmic reticulum lumen. It localises to the secreted. Its function is as follows. Splits internally a 1,3-beta-glucan molecule and transfers the newly generated reducing end (the donor) to the non-reducing end of another 1,3-beta-glucan molecule (the acceptor) forming a 1,3-beta linkage, resulting in the elongation of 1,3-beta-glucan chains in the cell wall. This chain is 1,3-beta-glucanosyltransferase gas2 (gas2), found in Schizosaccharomyces pombe (strain 972 / ATCC 24843) (Fission yeast).